A 255-amino-acid chain; its full sequence is Sulfur carrier protein FdhD (255 aa).

C103 acts as the Cysteine persulfide intermediate in catalysis.

Belongs to the FdhD family.

The protein resides in the cytoplasm. In terms of biological role, required for formate dehydrogenase (FDH) activity. Acts as a sulfur carrier protein that transfers sulfur from IscS to the molybdenum cofactor prior to its insertion into FDH. The chain is Sulfur carrier protein FdhD from Sulfurisphaera tokodaii (strain DSM 16993 / JCM 10545 / NBRC 100140 / 7) (Sulfolobus tokodaii).